Reading from the N-terminus, the 232-residue chain is Large ribosomal subunit protein uL1 (232 aa).

The protein belongs to the universal ribosomal protein uL1 family. As to quaternary structure, part of the 50S ribosomal subunit.

Its function is as follows. Binds directly to 23S rRNA. The L1 stalk is quite mobile in the ribosome, and is involved in E site tRNA release. Protein L1 is also a translational repressor protein, it controls the translation of the L11 operon by binding to its mRNA. The chain is Large ribosomal subunit protein uL1 from Xanthomonas campestris pv. campestris (strain B100).